The sequence spans 439 residues: Polygalacturonase QRT2 (439 aa).

The first 21 residues, 1 to 21, serve as a signal peptide directing secretion; it reads MYEKIIILSVFLLTFLPSCFS. Positions 43-69 are disordered; the sequence is RQHQHGHNTRNSHLKNRHGYAPRSSPR. A compositionally biased stretch (basic residues) spans 44–62; that stretch reads QHQHGHNTRNSHLKNRHGY. PbH1 repeat units follow at residues 201–250 and 251–272; these read CNNL…HVSG and TQNI…SIVS. Aspartate 265 serves as the catalytic Proton donor. Histidine 288 is a catalytic residue. 2 PbH1 repeats span residues 304 to 325 and 333 to 354; these read VSNV…RIKT and AKNI…IINQ.

It belongs to the glycosyl hydrolase 28 family. Expressed predominantly in roots with lower expression levels in rosette leaves, flower buds and siliques. Bearly detected in seeds. Found in flowers undergoing floral organ abscission. Also expressed early in anther development, at the time of microspore separation.

It localises to the secreted. The protein resides in the cell wall. The catalysed reaction is (1,4-alpha-D-galacturonosyl)n+m + H2O = (1,4-alpha-D-galacturonosyl)n + (1,4-alpha-D-galacturonosyl)m.. Functionally, polygalacturonase required for cell type-specific pectin degradation to separate microspores. Involved in anther dehiscence and floral organ abscission. In Arabidopsis thaliana (Mouse-ear cress), this protein is Polygalacturonase QRT2 (QRT2).